Here is a 419-residue protein sequence, read N- to C-terminus: Caspase-12 (419 aa).

The 92-residue stretch at 1–92 (MAARRTHERD…QLSLQFSNDE (92 aa)) folds into the CARD domain. A Phosphoserine modification is found at S85. The interval 88–113 (FSNDEDDGPQKICTPSSPSESKRKVE) is disordered. Residues H250 and C298 contribute to the active site.

This sequence belongs to the peptidase C14A family. As to quaternary structure, heterotetramer that consists of two anti-parallel arranged heterodimers, each one formed by two subunits (Potential). Interacts with TRAF2 under resting conditions; this interaction is reduced in ER stress conditions. As to expression, mainly expressed in skeletal muscle and lung.

In terms of biological role, involved in the activation cascade of caspases responsible for apoptosis execution. The protein is Caspase-12 (Casp12) of Mus musculus (Mouse).